Here is a 353-residue protein sequence, read N- to C-terminus: MKKTAIALVVAGLAAASVAQAAPQENTFYAGVKAGQASFHDGLRALAREKNVGYHRNSFTYGVFGGYQILNQNNLGLAVELGYDDFGRAKGREKGKTVAKHTNHGAHLSLKGSYEVLDGLDVYGKAGVALVRSDYKFYEDANGTRDHKKGRHTARASGLFAVGAEYAVLPELAVRLEYQWLTRVGKYRPQDKPNTAINYNPWIGSINAGISYRFGQGAAPVVAAPEVVSKTFSLNSDVTFAFGKANLKPQAQATLDSIYGEMSQVKSAKVAVAGYTDRIGSDAFNVKLSQERADSVANYFVAKGVAADAISATGYGKANPVTGATCDQVKGRKALIACLAPDRRVEIAVNGTK.

A signal peptide spans 1–21 (MKKTAIALVVAGLAAASVAQA). The next 8 beta stranded transmembrane spans lie at 27–37 (TFYAGVKAGQA), 58–69 (SFTYGVFGGYQI), 77–85 (LAVELGYDD), 104–115 (HGAHLSLKGSYE), 120–128 (LDVYGKAGV), 158–167 (GLFAVGAEYA), 172–179 (LAVRLEYQ), and 205–213 (SINAGISYR). In terms of domain architecture, OmpA-like spans 227 to 353 (VVSKTFSLNS…RVEIAVNGTK (127 aa)). C326 and C338 are disulfide-bonded.

This sequence belongs to the outer membrane OOP (TC 1.B.6) superfamily. OmpA family. In terms of assembly, monomer and homodimer.

The protein resides in the cell outer membrane. Its function is as follows. With TolR probably plays a role in maintaining the position of the peptidoglycan cell wall in the periplasm. Acts as a porin with low permeability that allows slow penetration of small solutes; an internal gate slows down solute passage. The chain is Outer membrane protein P5 from Haemophilus influenzae.